Consider the following 1079-residue polypeptide: Psi-producing oxygenase A (1079 aa).

Residues 105–446 (TNTFLTTLWN…DGSYDDNDLV (342 aa)) form a linoleate 8R-lipoxygenase region. A heme b-binding site is contributed by His-202. The active site involves Tyr-374. His-377 is a binding site for heme b. Residues 654–1079 (QFINSHSACM…WDGDLPEVKE (426 aa)) are 9,12-octadecadienoate 8-hydroperoxide 8R-isomerase.

This sequence belongs to the peroxidase family. In terms of assembly, homotetramer. Heme b serves as cofactor.

It catalyses the reaction (9Z,12Z)-octadecadienoate + O2 = (8R,9Z,12Z)-8-hydroperoxyoctadeca-9,12-dienoate. It carries out the reaction (8R,9Z,12Z)-8-hydroperoxyoctadeca-9,12-dienoate = (5S,8R,9Z,12Z)-5,8-dihydroxyoctadeca-9,12-dienoate. Bifunctional heme-containing enzyme that oxidizes linoleic acid to (8R,9Z,12Z)-8-hydroperoxyoctadeca-9,12-dienoate (within the N-terminal heme peroxidase domain), which is subsequently isomerized to (5S,8R,9Z,12Z)-5,8-dihydroxyoctadeca-9,12-dienoate (within the C-terminal P450 heme thiolate domain). Oxidized unsaturated fatty acids, so-called oxylipins, derived from endogenous fatty acids, influence the development of the asexual conidiophores and sexual cleistothecia and regulate the secondary metabolism. These substances were collectively named psi factors and are primarily a mixture of hydroxylated oleic, linoleic and alpha-linolenic acids. They are termed psi-beta, psi-alpha, and psi-gamma, respectively. Oxylipins may also serve as activators of mammalian immune responses contributing to enhanced resistance to opportunistic fungi and as factors that modulate fungal development contributing to resistance to host defenses. The polypeptide is Psi-producing oxygenase A (ppoA) (Aspergillus fumigatus (strain CBS 144.89 / FGSC A1163 / CEA10) (Neosartorya fumigata)).